The following is an 841-amino-acid chain: MESGPRAELGAGAPPAVVARTPPEPRPSPEGDPSPPPPPMSALVPDTPPDTPPAMKNATSSKQLPLEPESPSGQVGPRPAPPQEESPSSEAKSRGPTPPAMGPRDARPPRRSSQPSPTAVPASDSPPTKQEVKKAGERHKLAKERREERAKYLAAKKAVWLEKEEKAKALREKQLQERRRRLEEQRLKAEQRRAALEERQRQKLEKNKERYEAAIQRSVKKTWAEIRQQRWSWAGALHHSSPGHKTSGSRCSVSAVNLPKHVDSIINKRLSKSSATLWNSPSRNRSLQLSAWESSIVDRLMTPTLSFLARSRSAVTLPRNGRDQGRGCDPGRGPTWGRAGASLARGPQPDRTHPSAAVPVCPRSASASPLTPCSVTRSVHRCAPAGERGERRKPNAGGSPAPVRRRPEASPVQKKEKKDKERENEKEKSALARERSLKKRQSLPASPRARLSASTASELSPKSKARPSSPSTSWHRPASPCPSPGPGHTLPPKPPSPRGTTASPKGRVRRKEEAKESPSAAGPEDKSQSKRRASNEKESAAPASPAPSPAPSPTPAPPQKEQPPAETPTDAAVLTSPPAPAPPVTPSKPMAGTTDREEATRLLAEKRRQAREQREREEQERRLQAERDKRMREEQLAREAEARAEREAEARRREEQEAREKAQAEQEEQERLQKQKEEAEARSREEAERQRLEREKHFQQQEQERQERRKRLEEIMKRTRKSEVSETKQKQDSKEANANGSSPEPVKAVEARSPGLQKEAVQKEEPIPQEPQWSLPSKELPASLVNGLQPLPAHQENGFSTNGPSGDKSLSRTPETLLPFAEAEAFLKKAVVQSPQVTEVL.

2 disordered regions span residues 1 to 151 and 184 to 208; these read MESG…ERAK and EQRL…EKNK. A compositionally biased stretch (pro residues) spans 22 to 52; sequence PPEPRPSPEGDPSPPPPPMSALVPDTPPDTP. Phosphothreonine is present on residues threonine 47 and threonine 51. Serine 70, serine 86, and serine 93 each carry phosphoserine. Threonine 97 carries the phosphothreonine modification. Residues serine 113 and serine 116 each carry the phosphoserine modification. Threonine 118 is modified (phosphothreonine). 2 positions are modified to phosphoserine: serine 123 and serine 125. Residues 128 to 222 adopt a coiled-coil conformation; it reads TKQEVKKAGE…AAIQRSVKKT (95 aa). Residues 130 to 151 are compositionally biased toward basic and acidic residues; the sequence is QEVKKAGERHKLAKERREERAK. A phosphoserine mark is found at serine 254, serine 273, serine 313, serine 366, and serine 399. Residues 316–813 form a disordered region; it reads TLPRNGRDQG…PSGDKSLSRT (498 aa). Over residues 365–377 the composition is skewed to polar residues; sequence ASASPLTPCSVTR. Positions 405–435 are enriched in basic and acidic residues; that stretch reads RRPEASPVQKKEKKDKERENEKEKSALARER. Residues 412 to 441 adopt a coiled-coil conformation; it reads VQKKEKKDKERENEKEKSALARERSLKKRQ. Serine 442, serine 446, serine 452, serine 454, and serine 460 each carry phosphoserine. Low complexity predominate over residues 460-473; sequence SPKSKARPSSPSTS. Lysine 462 is covalently cross-linked (Glycyl lysine isopeptide (Lys-Gly) (interchain with G-Cter in SUMO2)). A phosphoserine mark is found at serine 479 and serine 496. A compositionally biased stretch (pro residues) spans 479-497; sequence SPCPSPGPGHTLPPKPPSP. Residues 523–539 show a composition bias toward basic and acidic residues; that stretch reads PEDKSQSKRRASNEKES. A phosphoserine mark is found at serine 544, serine 548, and serine 552. Over residues 544–561 the composition is skewed to pro residues; the sequence is SPAPSPAPSPTPAPPQKE. Residue threonine 554 is modified to Phosphothreonine. Positions 562-576 are enriched in low complexity; sequence QPPAETPTDAAVLTS. Pro residues predominate over residues 577 to 586; sequence PPAPAPPVTP. A coiled-coil region spans residues 593 to 721; the sequence is TTDREEATRL…LEEIMKRTRK (129 aa). Positions 594–735 are enriched in basic and acidic residues; it reads TDREEATRLL…ETKQKQDSKE (142 aa). Residues serine 742 and serine 753 each carry the phosphoserine modification. Phosphothreonine occurs at positions 813 and 816. Serine 834 is modified (phosphoserine).

It belongs to the MAP7 family.

The protein resides in the cytoplasm. Its subcellular location is the cytoskeleton. It localises to the spindle. The protein localises to the microtubule organizing center. It is found in the centrosome. The protein resides in the midbody. In terms of biological role, microtubule-stabilizing protein involved in the control of cell motility and neurite outgrowth. Facilitate microtubule stabilization through the maintenance of acetylated stable microtubules. The chain is MAP7 domain-containing protein 1 (MAP7D1) from Homo sapiens (Human).